A 158-amino-acid polypeptide reads, in one-letter code: Non-secretory ribonuclease (158 aa).

Positions 1-27 (MVPKLFTSQICLLPLLGLLSAEGSPHA) are cleaved as a signal peptide. The Proton acceptor role is filled by H42. Position 60 is a 3'-nitrotyrosine (Y60). Position 65-69 (65-69 (KNKNT)) interacts with substrate. N-linked (GlcNAc...) asparagine glycosylation is found at N86, N92, and N111. Residue H153 is the Proton donor of the active site.

It belongs to the pancreatic ribonuclease family. As to quaternary structure, interacts with and forms a tight 1:1 complex with RNH1. Dimerization of two such complexes may occur.

Its subcellular location is the lysosome. It localises to the cytoplasmic granule. The enzyme catalyses an [RNA] containing cytidine + H2O = an [RNA]-3'-cytidine-3'-phosphate + a 5'-hydroxy-ribonucleotide-3'-[RNA].. It catalyses the reaction an [RNA] containing uridine + H2O = an [RNA]-3'-uridine-3'-phosphate + a 5'-hydroxy-ribonucleotide-3'-[RNA].. Functionally, this is a non-secretory ribonuclease. It is a pyrimidine specific nuclease with a slight preference for U. Cytotoxin and helminthotoxin. Possesses a wide variety of biological activities. The chain is Non-secretory ribonuclease (RNASE2) from Callithrix jacchus (White-tufted-ear marmoset).